The sequence spans 490 residues: Cobyric acid synthase (490 aa).

Positions 250–432 (QLEIVVIRLP…LHGLLDNHAW (183 aa)) constitute a GATase cobBQ-type domain. The active-site Nucleophile is Cys-328. His-424 is an active-site residue.

It belongs to the CobB/CobQ family. CobQ subfamily.

Its pathway is cofactor biosynthesis; adenosylcobalamin biosynthesis. Catalyzes amidations at positions B, D, E, and G on adenosylcobyrinic A,C-diamide. NH(2) groups are provided by glutamine, and one molecule of ATP is hydrogenolyzed for each amidation. The sequence is that of Cobyric acid synthase from Gloeobacter violaceus (strain ATCC 29082 / PCC 7421).